Consider the following 183-residue polypeptide: Nascent polypeptide-associated complex subunit beta (183 aa).

The NAC-A/B domain occupies glycine 62–valine 127. The interval glutamine 150 to glutamate 183 is disordered. A compositionally biased stretch (acidic residues) spans glutamate 164–glutamate 183.

It belongs to the NAC-beta family. As to quaternary structure, part of the nascent polypeptide-associated complex (NAC), consisting of egd2 and egd1. NAC associates with ribosomes via egd1.

The protein localises to the cytoplasm. Its subcellular location is the nucleus. Component of the nascent polypeptide-associated complex (NAC), a dynamic component of the ribosomal exit tunnel, protecting the emerging polypeptides from interaction with other cytoplasmic proteins to ensure appropriate nascent protein targeting. The NAC complex also promotes mitochondrial protein import by enhancing productive ribosome interactions with the outer mitochondrial membrane and blocks the inappropriate interaction of ribosomes translating non-secretory nascent polypeptides with translocation sites in the membrane of the endoplasmic reticulum. EGD1 may act as a transcription factor that exert a negative effect on the expression of several genes that are transcribed by RNA polymerase II. The polypeptide is Nascent polypeptide-associated complex subunit beta (egd1) (Neosartorya fischeri (strain ATCC 1020 / DSM 3700 / CBS 544.65 / FGSC A1164 / JCM 1740 / NRRL 181 / WB 181) (Aspergillus fischerianus)).